The sequence spans 344 residues: uncharacterized protein (344 aa).

The protein belongs to the glycosyltransferase 2 family.

This is an uncharacterized protein from Escherichia coli (strain K12).